A 752-amino-acid polypeptide reads, in one-letter code: RNA-directed RNA polymerase catalytic subunit (752 aa).

2 short sequence motifs (nuclear localization signal) span residues 187–195 and 203–216; these read IKKKLPAKN and RIPM…TRVE. Residues 249-256 are promoter-binding site; that stretch reads RGFVLVVE. The 197-residue stretch at 286 to 482 folds into the RdRp catalytic domain; it reads VAKMLSNCPP…GINMSKKKSY (197 aa).

The protein belongs to the influenza viruses polymerase PB1 family. In terms of assembly, influenza RNA polymerase is composed of three subunits: PB1, PB2 and PA. Interacts (via N-terminus) with PA (via C-terminus). Interacts (via C-terminus) with PB2 (via N-terminus); this interaction is essential for transcription initiation. In terms of processing, phosphorylated by host PRKCA.

It localises to the host nucleus. Its subcellular location is the host cytoplasm. It carries out the reaction RNA(n) + a ribonucleoside 5'-triphosphate = RNA(n+1) + diphosphate. Functionally, RNA-dependent RNA polymerase which is responsible for replication and transcription of virus RNA segments. The transcription of viral mRNAs occurs by a unique mechanism called cap-snatching. 5' methylated caps of cellular mRNAs are cleaved after 10-13 nucleotides by PA. In turn, these short capped RNAs are used as primers by PB1 for transcription of viral mRNAs. During virus replication, PB1 initiates RNA synthesis and copy vRNA into complementary RNA (cRNA) which in turn serves as a template for the production of more vRNAs. This is RNA-directed RNA polymerase catalytic subunit from Homo sapiens (Human).